The chain runs to 600 residues: Phosphoenolpyruvate carboxykinase (ATP) (600 aa).

302-309 is an ATP binding site; the sequence is GLSGTGKT.

It belongs to the phosphoenolpyruvate carboxykinase (ATP) family.

The catalysed reaction is oxaloacetate + ATP = phosphoenolpyruvate + ADP + CO2. It participates in carbohydrate biosynthesis; gluconeogenesis. The protein is Phosphoenolpyruvate carboxykinase (ATP) (acuF) of Emericella nidulans (strain FGSC A4 / ATCC 38163 / CBS 112.46 / NRRL 194 / M139) (Aspergillus nidulans).